The following is a 318-amino-acid chain: Olfactory receptor 13C7 (318 aa).

Over 1–27 the chain is Extracellular; it reads MVSANQTASVTEFILLGLSAHPKLEKT. A helical transmembrane segment spans residues 28-48; it reads FFVLILLMYLVILLGNGVLIL. The Cytoplasmic portion of the chain corresponds to 49-61; the sequence is MTVSNSHLHMPMY. Residues 62-82 form a helical membrane-spanning segment; that stretch reads FFLGNLSFLDICYTTSSVPLI. The Extracellular portion of the chain corresponds to 83–100; that stretch reads LDSFLTPRKTISFSACAV. The helical transmembrane segment at 101 to 121 threads the bilayer; sequence QMFLSFAMGATECVLLSMMAF. The Cytoplasmic portion of the chain corresponds to 122–181; sequence DRYVAICNPLRYPVVMSKAAYMPKAAGSWVAGSTASMVQTSLAMRLPFCGDNIINHFTCE. Residues 182–202 traverse the membrane as a helical segment; that stretch reads ILAVLKLACADISVNVISMGV. Residues 203–205 are Extracellular-facing; it reads TNV. A helical membrane pass occupies residues 206 to 226; the sequence is IFLGVPVLFISFSYVFIIATI. Over 227–238 the chain is Cytoplasmic; that stretch reads LRIPSAEGRKKA. A helical transmembrane segment spans residues 239 to 259; sequence FSTCSAHLTVVVIFYGTILFM. Residues 260-278 lie on the Extracellular side of the membrane; it reads YGKPKSKDPLGADKQDLAD. Residues 279–289 form a helical membrane-spanning segment; the sequence is KLISLFYGVVT. Topologically, residues 290 to 318 are cytoplasmic; it reads PMLNPIIYSLRNKDVKAAVRDLIFQKCFA.

It belongs to the G-protein coupled receptor 1 family.

The protein resides in the cell membrane. Odorant receptor. The protein is Olfactory receptor 13C7 of Homo sapiens (Human).